The following is a 489-amino-acid chain: Putative ATP-dependent RNA helicase T26G10.1 (489 aa).

Positions 44–72 (KSFAELGVSQPLCDACQRLGWMKPSKIQQ) match the Q motif motif. The region spanning 75 to 246 (LPHALQGKDV…RASLRDPARV (172 aa)) is the Helicase ATP-binding domain. Position 88-95 (88-95 (AETGSGKT)) interacts with ATP. Positions 194–197 (DEAD) match the DEAD box motif. The region spanning 257-417 (NLKQHYIFVP…EYKCVENEVM (161 aa)) is the Helicase C-terminal domain. Positions 433–489 (EMKEMDEKKKSGKKRRQNDDFGDTEESGGRFKMGIKSMGGRGGSGGGRGGKKKKMSK) are disordered. The segment covering 469–480 (SMGGRGGSGGGR) has biased composition (gly residues).

The protein belongs to the DEAD box helicase family. DDX47/RRP3 subfamily.

The protein resides in the nucleus. It catalyses the reaction ATP + H2O = ADP + phosphate + H(+). Functionally, probable ATP-dependent RNA helicase which may be involved in ribosome biogenesis. The chain is Putative ATP-dependent RNA helicase T26G10.1 from Caenorhabditis elegans.